A 527-amino-acid polypeptide reads, in one-letter code: Glucose-6-phosphate isomerase (527 aa).

Glu-347 acts as the Proton donor in catalysis. Residues His-378 and Lys-493 contribute to the active site.

The protein belongs to the GPI family.

It is found in the cytoplasm. It carries out the reaction alpha-D-glucose 6-phosphate = beta-D-fructose 6-phosphate. It participates in carbohydrate biosynthesis; gluconeogenesis. Its pathway is carbohydrate degradation; glycolysis; D-glyceraldehyde 3-phosphate and glycerone phosphate from D-glucose: step 2/4. Functionally, catalyzes the reversible isomerization of glucose-6-phosphate to fructose-6-phosphate. The polypeptide is Glucose-6-phosphate isomerase (Chlamydia caviae (strain ATCC VR-813 / DSM 19441 / 03DC25 / GPIC) (Chlamydophila caviae)).